A 154-amino-acid chain; its full sequence is Pro-corazonin (154 aa).

A signal peptide spans 1-19; sequence MLRLLLLPLFLFTLSMCMG. Position 20 is a pyrrolidone carboxylic acid (Gln-20). Asn-30 is subject to Asparagine amide. A propeptide spanning residues 70 to 154 is cleaved from the precursor; that stretch reads LERCLSQLQR…SAEPNVFGKH (85 aa).

This sequence belongs to the corazonin family. Expression is restricted to 24 neurons in the larval CNS (8 in the brain and 16 in the ventral nerve cord) and 12-16 neurons in the pars lateralis of the adult brain.

Its subcellular location is the secreted. Its function is as follows. Cardioactive peptide. Corazonin is probably involved in the physiological regulation of the heart beat. Clock (Clk) and cycle (cyc) proteins negatively regulate Crz transcription in a cell-specific manner. The sequence is that of Pro-corazonin (Crz) from Drosophila simulans (Fruit fly).